The primary structure comprises 490 residues: Serine hydroxymethyltransferase, mitochondrial (490 aa).

The N-terminal 20 residues, 1-20, are a transit peptide targeting the mitochondrion; the sequence is MFPRASALAKCMATVHRRGL. An N6-(pyridoxal phosphate)lysine modification is found at Lys-265.

The protein belongs to the SHMT family. In terms of assembly, homotetramer. Interacts with NAP1. Pyridoxal 5'-phosphate serves as cofactor.

It is found in the mitochondrion. The catalysed reaction is (6R)-5,10-methylene-5,6,7,8-tetrahydrofolate + glycine + H2O = (6S)-5,6,7,8-tetrahydrofolate + L-serine. The protein operates within one-carbon metabolism; tetrahydrofolate interconversion. In terms of biological role, interconversion of serine and glycine. This Saccharomyces cerevisiae (strain ATCC 204508 / S288c) (Baker's yeast) protein is Serine hydroxymethyltransferase, mitochondrial (SHM1).